The primary structure comprises 824 residues: Glycerol-3-phosphate acyltransferase (824 aa).

Positions 302–307 (CHRSHM) match the HXXXXD motif motif.

This sequence belongs to the GPAT/DAPAT family.

The protein localises to the cell inner membrane. It catalyses the reaction sn-glycerol 3-phosphate + an acyl-CoA = a 1-acyl-sn-glycero-3-phosphate + CoA. The protein operates within phospholipid metabolism; CDP-diacylglycerol biosynthesis; CDP-diacylglycerol from sn-glycerol 3-phosphate: step 1/3. The protein is Glycerol-3-phosphate acyltransferase of Actinobacillus pleuropneumoniae serotype 7 (strain AP76).